A 632-amino-acid polypeptide reads, in one-letter code: Pescadillo homolog (632 aa).

A disordered region spans residues 306-341 (GDDADVDMDEGAKETDEEEDEDFVERPSKAQEVDDV). Acidic residues predominate over residues 307 to 328 (DDADVDMDEGAKETDEEEDEDF). In terms of domain architecture, BRCT spans 361 to 459 (RQNLLFSPYT…KIISSEGYGP (99 aa)). 3 disordered regions span residues 485–535 (GEKA…QNPS), 565–585 (TKVHAKKVPASQKEKKGEEDL), and 601–632 (MQYSNREKAAEKEKLEKKRKAIEKRKAKEAKA). Acidic residues predominate over residues 492–516 (QEGEEEEEAAEQDEGESEDEEEDGK). The span at 521 to 531 (AEYPPALLAAA) shows a compositional bias: low complexity. Composition is skewed to basic and acidic residues over residues 576 to 585 (QKEKKGEEDL) and 605 to 616 (NREKAAEKEKLE). Positions 595 to 632 (AKLYEKMQYSNREKAAEKEKLEKKRKAIEKRKAKEAKA) form a coiled coil.

Belongs to the pescadillo family. Component of the NOP7 complex, composed of ERB1, NOP7 and YTM1. The complex is held together by ERB1, which interacts with NOP7 via its N-terminal domain and with YTM1 via a high-affinity interaction between the seven-bladed beta-propeller domains of the 2 proteins. The NOP7 complex associates with the 66S pre-ribosome.

It localises to the nucleus. The protein localises to the nucleolus. Its subcellular location is the nucleoplasm. Its function is as follows. Component of the NOP7 complex, which is required for maturation of the 25S and 5.8S ribosomal RNAs and formation of the 60S ribosome. In Cryptococcus neoformans var. neoformans serotype D (strain B-3501A) (Filobasidiella neoformans), this protein is Pescadillo homolog.